A 294-amino-acid chain; its full sequence is Single-stranded nucleic acid-binding protein (294 aa).

The disordered stretch occupies residues 1–30; sequence MSAEIEEATNAVNNLSINDSEQQPRAPTHK. Ser-2 is subject to N-acetylserine. 2 positions are modified to phosphoserine: Ser-2 and Ser-16. Residues 10–25 show a composition bias toward polar residues; sequence NAVNNLSINDSEQQPR. The RRM 1 domain occupies 37–119; that stretch reads DTIFIGNVAH…REIHIKRART (83 aa). Position 49 is a phosphothreonine (Thr-49). Ser-66 is subject to Phosphoserine. Thr-91 and Thr-119 each carry phosphothreonine. Arg-125 is subject to Omega-N-methylarginine. Residues 131–151 are RNA-binding RGG-box; that stretch reads RGGFRGRGGFRGGFRGGYRGG. Dimethylated arginine is present on residues Arg-135, Arg-137, and Arg-141. Arg-145 is modified (dimethylated arginine; alternate). Arg-145 bears the Omega-N-methylarginine; alternate mark. Arg-149 carries the post-translational modification Omega-N-methylarginine. Gly residues predominate over residues 151 to 169; it reads GFRGRGNFRGRGGARGGFN. The segment at 151–171 is disordered; it reads GFRGRGNFRGRGGARGGFNGQ. 3 positions are modified to dimethylated arginine: Arg-153, Arg-155, and Arg-159. Arg-161 and Arg-165 each carry dimethylated arginine; alternate. Omega-N-methylarginine; alternate occurs at positions 161 and 165. The 89-residue stretch at 186 to 274 folds into the RRM 2 domain; that stretch reads DTLYINNVPF…RELTVDVAVI (89 aa). The residue at position 242 (Thr-242) is a Phosphothreonine. Ser-244 is modified (phosphoserine). Positions 275 to 294 are disordered; that stretch reads RPENDEEEIEQETGSEEKQE. Positions 278–288 are enriched in acidic residues; sequence NDEEEIEQETG. Position 287 is a phosphothreonine (Thr-287). Ser-289 carries the phosphoserine modification.

Belongs to the RRM GAR family. As to quaternary structure, associated with snR10 and snR11 small nuclear RNAs.

It localises to the cytoplasm. It is found in the nucleus. The protein resides in the nucleolus. Its subcellular location is the P-body. The protein localises to the stress granule. Functionally, functions in the transition of mRNAs from translation to an mRNP complex destined for decapping. High-copy-number suppressor of decapping defects. Overexpression suppresses decapping defects in both DCP1-2 and DCP2-7 mutations. Acts to promote translational repression of mRNA in conjunction with DHH1 and subsequent mRNA localization to P bodies. Promotes translational repression of mRNA during glucose deprivation. The chain is Single-stranded nucleic acid-binding protein (SBP1) from Saccharomyces cerevisiae (strain ATCC 204508 / S288c) (Baker's yeast).